The primary structure comprises 167 residues: uncharacterized protein (167 aa).

This is an uncharacterized protein from Homo sapiens (Human).